Consider the following 323-residue polypeptide: Cyclin-dependent kinase 1 (323 aa).

The Protein kinase domain maps to 4–306 (YQKIEKIGEG…AKQACMHPYF (303 aa)). ATP is bound by residues 10 to 18 (IGEGTYGVV) and K34. Residue T14 is modified to Phosphothreonine. Position 15 is a phosphotyrosine (Y15). Residue D147 is the Proton acceptor of the active site. T180 carries the phosphothreonine; by CAK modification.

This sequence belongs to the protein kinase superfamily. CMGC Ser/Thr protein kinase family. CDC2/CDKX subfamily. Forms a stable but non-covalent complex with a regulatory subunit (SUC1) and with a cyclin.

The catalysed reaction is L-seryl-[protein] + ATP = O-phospho-L-seryl-[protein] + ADP + H(+). It carries out the reaction L-threonyl-[protein] + ATP = O-phospho-L-threonyl-[protein] + ADP + H(+). With respect to regulation, phosphorylation at Thr-14 or Tyr-15 inactivates the enzyme, while phosphorylation at Thr-180 activates it. Functionally, cyclin-dependent kinase that acts as a master regulator of the mitotic and meiotic cell cycles. The chain is Cyclin-dependent kinase 1 from Emericella nidulans (strain FGSC A4 / ATCC 38163 / CBS 112.46 / NRRL 194 / M139) (Aspergillus nidulans).